The sequence spans 438 residues: Proline--tRNA ligase (438 aa).

This sequence belongs to the class-II aminoacyl-tRNA synthetase family. ProS type 2 subfamily. In terms of assembly, homodimer.

The protein resides in the cytoplasm. The catalysed reaction is tRNA(Pro) + L-proline + ATP = L-prolyl-tRNA(Pro) + AMP + diphosphate. In terms of biological role, catalyzes the attachment of proline to tRNA(Pro) in a two-step reaction: proline is first activated by ATP to form Pro-AMP and then transferred to the acceptor end of tRNA(Pro). In Rhodopseudomonas palustris (strain TIE-1), this protein is Proline--tRNA ligase.